We begin with the raw amino-acid sequence, 140 residues long: ATP synthase epsilon chain (140 aa).

It belongs to the ATPase epsilon chain family. F-type ATPases have 2 components, CF(1) - the catalytic core - and CF(0) - the membrane proton channel. CF(1) has five subunits: alpha(3), beta(3), gamma(1), delta(1), epsilon(1). CF(0) has three main subunits: a, b and c.

It localises to the cell inner membrane. In terms of biological role, produces ATP from ADP in the presence of a proton gradient across the membrane. In Yersinia pseudotuberculosis serotype O:1b (strain IP 31758), this protein is ATP synthase epsilon chain.